A 280-amino-acid chain; its full sequence is Serine protease 33 (280 aa).

The N-terminal stretch at 1-22 (MRGVSCLQVLLLLVLGAAGTQG) is a signal peptide. Positions 37–279 (IVGGRDGRDG…YSPWIQARVS (243 aa)) constitute a Peptidase S1 domain. The cysteines at positions 62 and 78 are disulfide-linked. Active-site charge relay system residues include His77 and Asp126. Disulfide bonds link Cys160-Cys237, Cys193-Cys216, and Cys227-Cys255. Ser231 (charge relay system) is an active-site residue.

The protein belongs to the peptidase S1 family. In terms of tissue distribution, predominantly expressed in macrophages. Present in the spleen, small and large intestine, lung and brain (at protein level). Highly expressed in peripheral leukocytes, ovary, retina, spleen and stomach. Moderately expressed in thymus, uterus and platelets, as well as some brain tissues, such as thalamus and fetal brain.

It is found in the secreted. Serine protease that has amidolytic activity, cleaving its substrates before Arg residues. The sequence is that of Serine protease 33 (PRSS33) from Homo sapiens (Human).